Reading from the N-terminus, the 364-residue chain is Glycosyltransferase 8 domain-containing protein 1 (364 aa).

Topologically, residues 1 to 5 are cytoplasmic; the sequence is MRRVH. A helical; Signal-anchor for type II membrane protein transmembrane segment spans residues 6 to 26; the sequence is ITVILLAAVIFLLVLHHNILG. Residues 27-364 are Lumenal-facing; the sequence is LSDILKRQNS…QFSLIRRHAE (338 aa). N-linked (GlcNAc...) asparagine glycosylation is found at asparagine 102, asparagine 247, and asparagine 255.

The protein belongs to the glycosyltransferase 8 family.

Its subcellular location is the membrane. The sequence is that of Glycosyltransferase 8 domain-containing protein 1 (glt8d1) from Xenopus laevis (African clawed frog).